We begin with the raw amino-acid sequence, 524 residues long: MSWYSVDSEIESLERRHAGHHHTVNIKYGYVILALSIVHMVLSISGKKLYFKNWAETGRASSWWRSVVSIPFWVSTLVWLAIFAFLSIFHIEELSENYTTAVKRLGRMAYCLVPFTIFISLRPPNTVGYQSGYYLEKLNLHKWISRLIFATAIGHGLGFLYKWTKEGALAEKIFKFDNFLGVTVFALMPVLIFASVNVMRRRNYRLFYILHNVTLWMFVVLIAFHARPGVPLLAVINLALLGYQIYQRFFKSYYLHDISVVESPYSKMQIIRIPRPETFPSYLPGSHIRLGYSATNISAWLYATHPFTIASTNDDSESTLDLVMNKPVNFPIDITSPYTMTGPFPSLPPQFYTTARHVNIICGGSGISFGLPIYKYFVNSNRSIPIRLIWCIRSSDDTFILDHLLPERSIDVQIYITSNTGSLNQQQSASTIFDEEADALLEGDSTTNIEMANLATDKEEKKTDHFNTIHDGRPNFDDAFGNLAAAVDVDEKWLIACGPRKLIDDCRKWTKGKDIEFYSELYEM.

Helical transmembrane passes span valine 24 to isoleucine 44, serine 69 to phenylalanine 89, arginine 104 to leucine 121, tryptophan 143 to tryptophan 163, phenylalanine 179 to methionine 199, leucine 206 to alanine 226, and valine 230 to phenylalanine 250. A Ferric oxidoreductase domain is found at leucine 105–isoleucine 222. An FAD-binding FR-type domain is found at arginine 248 to proline 372.

Belongs to the ferric reductase (FRE) family. AIM14 subfamily.

It is found in the membrane. Probable cell surface metalloreductase. May be involved in iron or copper homeostasis. The sequence is that of Probable metalloreductase AIM14 (AIM14) from Scheffersomyces stipitis (strain ATCC 58785 / CBS 6054 / NBRC 10063 / NRRL Y-11545) (Yeast).